The following is a 702-amino-acid chain: Polyphosphate kinase (702 aa).

Asn55 lines the ATP pocket. Residues Arg389 and Arg419 each coordinate Mg(2+). His449 serves as the catalytic Phosphohistidine intermediate. Residues Tyr482, Arg578, and His606 each coordinate ATP.

Belongs to the polyphosphate kinase 1 (PPK1) family. Requires Mg(2+) as cofactor. An intermediate of this reaction is the autophosphorylated ppk in which a phosphate is covalently linked to a histidine residue through a N-P bond.

It carries out the reaction [phosphate](n) + ATP = [phosphate](n+1) + ADP. Catalyzes the reversible transfer of the terminal phosphate of ATP to form a long-chain polyphosphate (polyP). This Bacillus cereus (strain ATCC 14579 / DSM 31 / CCUG 7414 / JCM 2152 / NBRC 15305 / NCIMB 9373 / NCTC 2599 / NRRL B-3711) protein is Polyphosphate kinase.